A 152-amino-acid polypeptide reads, in one-letter code: Endoribonuclease YbeY (152 aa).

Residues His113, His117, and His123 each coordinate Zn(2+).

Belongs to the endoribonuclease YbeY family. Zn(2+) is required as a cofactor.

It localises to the cytoplasm. Its function is as follows. Single strand-specific metallo-endoribonuclease involved in late-stage 70S ribosome quality control and in maturation of the 3' terminus of the 16S rRNA. This Wolbachia pipientis subsp. Culex pipiens (strain wPip) protein is Endoribonuclease YbeY.